A 298-amino-acid polypeptide reads, in one-letter code: U1 small nuclear ribonucleoprotein A (298 aa).

RRM domains are found at residues 2-113 (SALY…KART) and 227-298 (KVLL…GFAK).

Belongs to the RRM U1 A/B'' family. Component of the spliceosome where it is associated with snRNP U1.

The protein resides in the nucleus. In terms of biological role, involved in nuclear mRNA splicing. The principal role of the U1A is to help fold or maintain U1 RNA in an active configuration. It is the first snRNP to interact with pre-mRNA. This interaction is required for the subsequent binding of U2 snRNP and the U4/U6/U5 tri-snRNP. The chain is U1 small nuclear ribonucleoprotein A (MUD1) from Saccharomyces cerevisiae (strain ATCC 204508 / S288c) (Baker's yeast).